The primary structure comprises 153 residues: General odorant-binding protein lush (153 aa).

The first 29 residues, 1–29, serve as a signal peptide directing secretion; sequence MKHWKRRSSAVFAIVLQVLVLLLPDPAVA. 3 cysteine pairs are disulfide-bonded: cysteine 46–cysteine 79, cysteine 75–cysteine 132, and cysteine 121–cysteine 141. Serine 81 and threonine 86 together coordinate 1-propanol. 2 residues coordinate butan-1-ol: serine 81 and threonine 86. The ethanol site is built by serine 81 and threonine 86.

It belongs to the PBP/GOBP family. As to expression, specifically expressed in chemosensory system in both males and females. Expressed in a subset of trichoid chemosensory sensilla located on the ventral-lateral surface of the third antennal segment. Secreted from non-neuronal support cells into the sensillum lymph that bathes the olfactory neurons within these sensilla.

Its subcellular location is the secreted. Odorant-binding protein required for olfactory behavior and for activity of pheromone-sensitive neurons. Binds to alcohols and mediates avoidance behavior to high concentrations of alcohols, the alcohol-binding possibly resulting in activation of receptors on T2B neurons, the activation of these receptors inhibiting these neurons. Acts in concert with Snmp and lush to capture cVA molecules on the surface of Or67d expressing olfactory dendrites and facilitate their transfer to the odorant-receptor Orco complex. Required for cVA response, probably by binding to VA. May act by serving as an adapter that bridges the presence of gaseous pheromone molecules, cVA, to activation of specific neuronal receptors expressed on T1 olfactory neurons, possibly via a specific conformational change induced by cVA that in turn activates T1 receptors. T1 neurons are excited by the pheromone VA, while T2 neurons are inhibited by alcohols. Also binds to phthalates. The polypeptide is General odorant-binding protein lush (lush) (Drosophila melanogaster (Fruit fly)).